The sequence spans 269 residues: Putative hydro-lyase Aave_3512 (269 aa).

It belongs to the D-glutamate cyclase family.

This Paracidovorax citrulli (strain AAC00-1) (Acidovorax citrulli) protein is Putative hydro-lyase Aave_3512.